The sequence spans 455 residues: Angiopoietin-related protein 3 (455 aa).

An N-terminal signal peptide occupies residues 1–16; that stretch reads MHTIKLFLFVVPLVIA. Positions 17-165 are sufficient to inhibit LPL lipase activity; that stretch reads SRVDPDLSSF…QEHPEVTSLK (149 aa). The sufficient to inhibit LIPG/EL phospholipase activity stretch occupies residues 17–207; the sequence is SRVDPDLSSF…EIEKQLRKTG (191 aa). Residues 32–56 are required for inhibition of LPL lipase activity; it reads EPKSRFAMLDDVKILANGLLQLGHG. Residues 85 to 206 are a coiled coil; it reads LSLRTNEIKE…KEIEKQLRKT (122 aa). N115 is a glycosylation site (N-linked (GlcNAc...) asparagine). The tract at residues 202-242 is disordered; it reads QLRKTGIQEPSENSLSSKSRAPRTTPPLQLNETENTEQDDL. The segment covering 209–220 has biased composition (polar residues); sequence QEPSENSLSSKS. A glycan (O-linked (GlcNAc) threonine) is linked at T226. The N-linked (GlcNAc...) asparagine glycan is linked to N232. The region spanning 237 to 455 is the Fibrinogen C-terminal domain; that stretch reads TEQDDLPADC…SSKMMLQPTT (219 aa). C246 and C274 are disulfide-bonded. Residues N296 and N357 are each glycosylated (N-linked (GlcNAc...) asparagine). C394 and C408 are oxidised to a cystine.

As to quaternary structure, interacts with ANGPTL8. Interacts with ITGB3. In terms of processing, in part proteolytically cleaved by proprotein convertases; proposed to be involved in activation. In primary hepatocytes is intracellularily predominantly processed by FURIN and extracellularily by FURIN and PCSK6/PACE4. In 18.5 dpc embryos 75% of protein is found to be processed compared to 25 % in adults. In terms of tissue distribution, predominantly expressed in liver, weakly expressed in kidney and lung. Expressed in podocytes (at protein level). Expressed in hypothalamic neurons (at protein level). Expressed in bone marrow sinusoidal endothelial cells (at protein level).

Its subcellular location is the secreted. It localises to the cell projection. It is found in the lamellipodium. In terms of biological role, acts in part as a hepatokine that is involved in regulation of lipid and glucose metabolism. Proposed to play a role in the trafficking of energy substrates to either storage or oxidative tissues in response to food intake. Has a stimulatory effect on plasma triglycerides (TG), which is achieved by suppressing plasma TG clearance via inhibition of LPL activity; the function seems to be specific for the feeding conditions. The inhibition of LPL activity appears to be an indirect mechanism involving recruitment of proprotein convertases PCSK6 and FURIN to LPL leading to cleavage and dissociation of LPL from the cell surface; the function does not require ANGPTL3 proteolytic cleavage but seems to be mediated by the N-terminal domain, and is not inhibited by GPIHBP1. Can inhibit endothelial lipase, causing increased plasma levels of high density lipoprotein (HDL) cholesterol and phospholipids; the cleaved N-terminal domain is more efficient than the uncleaved proprotein. Can bind to adipocytes to activate lipolysis, releasing free fatty acids and glycerol. Suppresses LPL specifically in oxidative tissues which is required to route very low density lipoprotein (VLDL)-TG to white adipose tissue (WAT) for storage in response to food; the function may involve cooperation with circulating, liver-derived ANGPTL8 and ANGPTL4 expression in WAT. Contributes to lower plasma levels of low density lipoprotein (LDL)-cholesterol by a mechanism that is independent of the canonical pathway implicating APOE and LDLR. May stimulate hypothalamic LPL activity. Involved in angiogenesis. Binds to endothelial cells via integrin alpha-V/beta-3 (ITGAV:ITGB3), activates FAK, MAPK and Akt signaling pathways and induces cell adhesion and cell migration. May increase the motility of podocytes. Secreted from podocytes, may modulate properties of glomerular endothelial cells involving integrin alpha-V/beta-3 and Akt signaling. May induce actin filament rearrangements in podocytes implicating integrin alpha-V/beta-3 and Rac1 activation. Binds to hematopoietic stem cells (HSC) and is involved in the regulation of HSC activity probably implicating down-regulation of IKZF1/IKAROS. This Mus musculus (Mouse) protein is Angiopoietin-related protein 3 (Angptl3).